The sequence spans 433 residues: Serine hydroxymethyltransferase (433 aa).

Residue 122-124 participates in (6S)-5,6,7,8-tetrahydrofolate binding; the sequence is AHV. Lysine 228 is modified (N6-(pyridoxal phosphate)lysine).

This sequence belongs to the SHMT family. As to quaternary structure, homodimer. It depends on pyridoxal 5'-phosphate as a cofactor.

The protein localises to the cytoplasm. The protein operates within amino-acid biosynthesis; glycine biosynthesis; glycine from L-serine: step 1/1. In terms of biological role, catalyzes the reversible interconversion of serine and glycine with a modified folate serving as the one-carbon carrier. Also exhibits a pteridine-independent aldolase activity toward beta-hydroxyamino acids, producing glycine and aldehydes, via a retro-aldol mechanism. This Sulfolobus acidocaldarius (strain ATCC 33909 / DSM 639 / JCM 8929 / NBRC 15157 / NCIMB 11770) protein is Serine hydroxymethyltransferase.